A 113-amino-acid chain; its full sequence is U11-theraphotoxin-Hhn1a (113 aa).

The signal sequence occupies residues 1–21 (MNTVRVTFLLVFVLAVSLGQA). Positions 22 to 74 (DKDENRMEMQEKTEQGNSYLDFAENLPLQKLEELEAKLLEEDSEESRNSRQKR) are excised as a propeptide. The segment covering 60-69 (LEEDSEESRN) has biased composition (basic and acidic residues). The tract at residues 60–83 (LEEDSEESRNSRQKRCIGEGVPCD) is disordered. 3 disulfide bridges follow: cysteine 75/cysteine 90, cysteine 82/cysteine 95, and cysteine 89/cysteine 110.

Belongs to the neurotoxin 14 (magi-1) family. 01 (HNTX-16) subfamily. Expressed by the venom gland.

It localises to the secreted. Functionally, probable ion channel inhibitor. This Cyriopagopus hainanus (Chinese bird spider) protein is U11-theraphotoxin-Hhn1a.